Consider the following 105-residue polypeptide: Heat shock protein HspQ (105 aa).

The protein belongs to the HspQ family.

It localises to the cytoplasm. Functionally, involved in the degradation of certain denaturated proteins, including DnaA, during heat shock stress. The protein is Heat shock protein HspQ of Salmonella choleraesuis (strain SC-B67).